A 167-amino-acid polypeptide reads, in one-letter code: Peptide deformylase (167 aa).

Positions 91 and 133 each coordinate Fe cation. The active site involves Glu-134. Residue His-137 coordinates Fe cation.

This sequence belongs to the polypeptide deformylase family. Fe(2+) serves as cofactor.

It catalyses the reaction N-terminal N-formyl-L-methionyl-[peptide] + H2O = N-terminal L-methionyl-[peptide] + formate. In terms of biological role, removes the formyl group from the N-terminal Met of newly synthesized proteins. Requires at least a dipeptide for an efficient rate of reaction. N-terminal L-methionine is a prerequisite for activity but the enzyme has broad specificity at other positions. The protein is Peptide deformylase of Neisseria meningitidis serogroup C (strain 053442).